Reading from the N-terminus, the 342-residue chain is Glycerol-3-phosphate dehydrogenase [NAD(P)+] (342 aa).

NADPH is bound by residues Ser13, Trp14, and Lys108. Sn-glycerol 3-phosphate-binding residues include Lys108, Gly139, and Ser141. Residue Ala143 coordinates NADPH. Lys194, Asp247, Ser257, Arg258, and Asn259 together coordinate sn-glycerol 3-phosphate. Lys194 functions as the Proton acceptor in the catalytic mechanism. NADPH is bound at residue Arg258. Residues Val282 and Glu284 each coordinate NADPH.

The protein belongs to the NAD-dependent glycerol-3-phosphate dehydrogenase family.

It is found in the cytoplasm. The enzyme catalyses sn-glycerol 3-phosphate + NAD(+) = dihydroxyacetone phosphate + NADH + H(+). It carries out the reaction sn-glycerol 3-phosphate + NADP(+) = dihydroxyacetone phosphate + NADPH + H(+). It participates in membrane lipid metabolism; glycerophospholipid metabolism. In terms of biological role, catalyzes the reduction of the glycolytic intermediate dihydroxyacetone phosphate (DHAP) to sn-glycerol 3-phosphate (G3P), the key precursor for phospholipid synthesis. The protein is Glycerol-3-phosphate dehydrogenase [NAD(P)+] of Lactococcus lactis subsp. cremoris (strain MG1363).